A 157-amino-acid polypeptide reads, in one-letter code: Transcription factor HES-2 (157 aa).

One can recognise a bHLH domain in the interval 13–70 (LRKSLKPLLEKRRRARINESLSQLKGLVLPLLGAETSRYSKLEKADILEMTVRFLREQ). One can recognise an Orange domain in the interval 86 to 119 (YLEGYRACLARLARVLPACSVLEPAVSARLLEHL). Residues 124–157 (VSGGPPSLTPASASAPAPSPPVPPPSSLGLWRPW) are disordered. The segment covering 125–139 (SGGPPSLTPASASAP) has biased composition (low complexity). A compositionally biased stretch (pro residues) spans 140–149 (APSPPVPPPS). The short motif at 154–157 (WRPW) is the WRPW motif element.

Transcription repression requires formation of a complex with a corepressor protein of the Groucho/TLE family.

It localises to the nucleus. Its function is as follows. Transcriptional repressor of genes that require a bHLH protein for their transcription. In Rattus norvegicus (Rat), this protein is Transcription factor HES-2 (Hes2).